A 72-amino-acid polypeptide reads, in one-letter code: Sperm protein associated with the nucleus on the X chromosome N1 (72 aa).

Residues 1-44 form a disordered region; it reads MEQPTSSINGEKRKSPCESNNENDEMQETPNRDLAPEPSLKKMK.

The protein belongs to the SPAN-X family.

This Homo sapiens (Human) protein is Sperm protein associated with the nucleus on the X chromosome N1 (SPANXN1).